Consider the following 263-residue polypeptide: UPF0328 protein ECU08_2060 (263 aa).

This sequence belongs to the UPF0328 family.

This chain is UPF0328 protein ECU08_2060, found in Encephalitozoon cuniculi (strain GB-M1) (Microsporidian parasite).